The following is a 292-amino-acid chain: NAC domain-containing protein 96 (292 aa).

The NAC domain occupies 6–158 (LPPGFRFHPT…AFVLCRVAMK (153 aa)). The DNA-binding element occupies 106–164 (IGYRKTLVFYKGRAPLGDRSNWIMHEYRLCDDDTSQGSQNLKGAFVLCRVAMKNEIKTN). A disordered region spans residues 171–199 (PSEQTIGSGESSGLSSRVTSPSRDETMPF). A compositionally biased stretch (polar residues) spans 172–191 (SEQTIGSGESSGLSSRVTSP).

As to quaternary structure, interacts with ABF2 and ABF4. As to expression, expressed in roots, rosettes leaves, cauline leaves and stems.

Its subcellular location is the nucleus. Its function is as follows. Transcriptional activator involved in the positive regulation of abscisic acid (ABA) responsive genes. Acts as a positive factor of ABA-mediated responses. Involved in the transcriptional activation of ABA-inducible genes in response to dehydration and osmotic stresses. Plays a positive role in both stomatal closure and water loss under dehydration stress conditions. Acts synergistically with ABF2 to activate the dehydration stress-response factor RD29A transcription. Binds to the consensus core cis-acting elements 5'-CGTA-3' and 5'-CACG-3' at the RD29A promoter. Involved in hypocotyl graft union formation. Required for the auxin-mediated promotion of vascular tissue proliferation during hypocotyl graft attachment. In Arabidopsis thaliana (Mouse-ear cress), this protein is NAC domain-containing protein 96.